The chain runs to 105 residues: Large ribosomal subunit protein bL21 (105 aa).

The protein belongs to the bacterial ribosomal protein bL21 family. Part of the 50S ribosomal subunit. Contacts protein L20.

In terms of biological role, this protein binds to 23S rRNA in the presence of protein L20. The chain is Large ribosomal subunit protein bL21 from Rhizobium etli (strain CIAT 652).